A 237-amino-acid polypeptide reads, in one-letter code: CDP-diacylglycerol--serine O-phosphatidyltransferase (237 aa).

8 helical membrane passes run 3–23 (INPLYLFPNLFTASSIFLGMM), 25–45 (IFYASSYQFVMACWLVVASLI), 73–93 (VVAFGVAPSLITYFYVGYNFG), 95–115 (IGMAVSALFVIFGAIRLARFN), 124–144 (YSFIGIPIPAAAVLVVLCVLL), 150–170 (FLEGNTEKLFLGFIVLLGVLM), 184–204 (WNLKLFILVLIFLSLVFVRPL), and 207–227 (LSVFMGLYLIYGIIRWIFLMV).

It belongs to the CDP-alcohol phosphatidyltransferase class-I family.

Its subcellular location is the cell membrane. It catalyses the reaction a CDP-1,2-diacyl-sn-glycerol + L-serine = a 1,2-diacyl-sn-glycero-3-phospho-L-serine + CMP + H(+). The sequence is that of CDP-diacylglycerol--serine O-phosphatidyltransferase (pssA) from Helicobacter pylori (strain J99 / ATCC 700824) (Campylobacter pylori J99).